A 477-amino-acid chain; its full sequence is 3-isopropylmalate dehydratase large subunit (477 aa).

[4Fe-4S] cluster-binding residues include Cys-358, Cys-419, and Cys-422.

This sequence belongs to the aconitase/IPM isomerase family. LeuC type 1 subfamily. Heterodimer of LeuC and LeuD. It depends on [4Fe-4S] cluster as a cofactor.

The catalysed reaction is (2R,3S)-3-isopropylmalate = (2S)-2-isopropylmalate. Its pathway is amino-acid biosynthesis; L-leucine biosynthesis; L-leucine from 3-methyl-2-oxobutanoate: step 2/4. Catalyzes the isomerization between 2-isopropylmalate and 3-isopropylmalate, via the formation of 2-isopropylmaleate. This is 3-isopropylmalate dehydratase large subunit from Acinetobacter baylyi (strain ATCC 33305 / BD413 / ADP1).